Reading from the N-terminus, the 911-residue chain is Protein translocase subunit SecA (911 aa).

ATP is bound by residues Q90, 108–112 (GEGKT), and D515. Zn(2+) is bound by residues C891, C893, C902, and H903.

Belongs to the SecA family. As to quaternary structure, monomer and homodimer. Part of the essential Sec protein translocation apparatus which comprises SecA, SecYEG and auxiliary proteins SecDF-YajC and YidC. It depends on Zn(2+) as a cofactor.

The protein resides in the cell inner membrane. It localises to the cytoplasm. It carries out the reaction ATP + H2O + cellular proteinSide 1 = ADP + phosphate + cellular proteinSide 2.. Its function is as follows. Part of the Sec protein translocase complex. Interacts with the SecYEG preprotein conducting channel. Has a central role in coupling the hydrolysis of ATP to the transfer of proteins into and across the cell membrane, serving both as a receptor for the preprotein-SecB complex and as an ATP-driven molecular motor driving the stepwise translocation of polypeptide chains across the membrane. This chain is Protein translocase subunit SecA, found in Blochmanniella pennsylvanica (strain BPEN).